We begin with the raw amino-acid sequence, 230 residues long: V-type proton ATPase subunit E (230 aa).

This sequence belongs to the V-ATPase E subunit family. As to quaternary structure, V-ATPase is a heteromultimeric enzyme composed of a peripheral catalytic V1 complex (components A to H) attached to an integral membrane V0 proton pore complex (components: a, c, c', c'' and d).

In terms of biological role, subunit of the peripheral V1 complex of vacuolar ATPase essential for assembly or catalytic function. V-ATPase is responsible for acidifying a variety of intracellular compartments in eukaryotic cells. The chain is V-type proton ATPase subunit E (VATE) from Citrus unshiu (Satsuma mandarin).